A 374-amino-acid chain; its full sequence is tRNA-specific 2-thiouridylase MnmA (374 aa).

Residues 13–20 and Met39 contribute to the ATP site; that span reads GMSGGVDS. The interval 99-101 is interaction with target base in tRNA; the sequence is NPD. The active-site Nucleophile is Cys104. A disulfide bridge connects residues Cys104 and Cys201. ATP is bound at residue Gly128. An interaction with tRNA region spans residues 151-153; sequence KDQ. Catalysis depends on Cys201, which acts as the Cysteine persulfide intermediate. The tract at residues 313–314 is interaction with tRNA; sequence RY.

Belongs to the MnmA/TRMU family.

The protein localises to the cytoplasm. The catalysed reaction is S-sulfanyl-L-cysteinyl-[protein] + uridine(34) in tRNA + AH2 + ATP = 2-thiouridine(34) in tRNA + L-cysteinyl-[protein] + A + AMP + diphosphate + H(+). Functionally, catalyzes the 2-thiolation of uridine at the wobble position (U34) of tRNA, leading to the formation of s(2)U34. This is tRNA-specific 2-thiouridylase MnmA from Streptococcus suis (strain 98HAH33).